The sequence spans 186 residues: Elongation factor P (186 aa).

It belongs to the elongation factor P family.

The protein localises to the cytoplasm. It participates in protein biosynthesis; polypeptide chain elongation. Its function is as follows. Involved in peptide bond synthesis. Stimulates efficient translation and peptide-bond synthesis on native or reconstituted 70S ribosomes in vitro. Probably functions indirectly by altering the affinity of the ribosome for aminoacyl-tRNA, thus increasing their reactivity as acceptors for peptidyl transferase. This chain is Elongation factor P, found in Beutenbergia cavernae (strain ATCC BAA-8 / DSM 12333 / CCUG 43141 / JCM 11478 / NBRC 16432 / NCIMB 13614 / HKI 0122).